A 351-amino-acid chain; its full sequence is Holliday junction branch migration complex subunit RuvB (351 aa).

Over residues 1 to 12 (MGRFEDDAEVED) the composition is skewed to acidic residues. The disordered stretch occupies residues 1 to 23 (MGRFEDDAEVEDREVSPALTVGE). The segment at 1–191 (MGRFEDDAEV…FGFTAHMDFY (191 aa)) is large ATPase domain (RuvB-L). Residues Leu30, Arg31, Gly72, Lys75, Thr76, Ser77, 138–140 (EDF), Arg181, Tyr191, and Arg228 contribute to the ATP site. Thr76 is a Mg(2+) binding site. Positions 192 to 262 (EPVELERVLA…IAKSALEVYD (71 aa)) are small ATPAse domain (RuvB-S). Residues 265–351 (ELGLDRLDRA…TGIGQAGLFD (87 aa)) form a head domain (RuvB-H) region. Positions 320 and 325 each coordinate DNA.

It belongs to the RuvB family. Homohexamer. Forms an RuvA(8)-RuvB(12)-Holliday junction (HJ) complex. HJ DNA is sandwiched between 2 RuvA tetramers; dsDNA enters through RuvA and exits via RuvB. An RuvB hexamer assembles on each DNA strand where it exits the tetramer. Each RuvB hexamer is contacted by two RuvA subunits (via domain III) on 2 adjacent RuvB subunits; this complex drives branch migration. In the full resolvosome a probable DNA-RuvA(4)-RuvB(12)-RuvC(2) complex forms which resolves the HJ.

It localises to the cytoplasm. It carries out the reaction ATP + H2O = ADP + phosphate + H(+). In terms of biological role, the RuvA-RuvB-RuvC complex processes Holliday junction (HJ) DNA during genetic recombination and DNA repair, while the RuvA-RuvB complex plays an important role in the rescue of blocked DNA replication forks via replication fork reversal (RFR). RuvA specifically binds to HJ cruciform DNA, conferring on it an open structure. The RuvB hexamer acts as an ATP-dependent pump, pulling dsDNA into and through the RuvAB complex. RuvB forms 2 homohexamers on either side of HJ DNA bound by 1 or 2 RuvA tetramers; 4 subunits per hexamer contact DNA at a time. Coordinated motions by a converter formed by DNA-disengaged RuvB subunits stimulates ATP hydrolysis and nucleotide exchange. Immobilization of the converter enables RuvB to convert the ATP-contained energy into a lever motion, pulling 2 nucleotides of DNA out of the RuvA tetramer per ATP hydrolyzed, thus driving DNA branch migration. The RuvB motors rotate together with the DNA substrate, which together with the progressing nucleotide cycle form the mechanistic basis for DNA recombination by continuous HJ branch migration. Branch migration allows RuvC to scan DNA until it finds its consensus sequence, where it cleaves and resolves cruciform DNA. The sequence is that of Holliday junction branch migration complex subunit RuvB from Mycolicibacterium smegmatis (strain ATCC 700084 / mc(2)155) (Mycobacterium smegmatis).